The chain runs to 351 residues: Outer membrane porin PhoE (351 aa).

The signal sequence occupies residues 1–21 (MKKSTLALVVMGITASASVQA).

This sequence belongs to the Gram-negative porin family. As to quaternary structure, homotrimer.

It localises to the cell outer membrane. Uptake of inorganic phosphate, phosphorylated compounds, and some other negatively charged solutes. This is Outer membrane porin PhoE (phoE) from Citrobacter freundii.